The following is a 201-amino-acid chain: CASP-like protein 2B2 (201 aa).

Over 1–28 (MSYLGVGVSPGNVSGSTTKMKLIDRKVR) the chain is Cytoplasmic. A helical transmembrane segment spans residues 29–49 (VTELILRCLVCVLALVAAILI). Residues 50–71 (ATDVQVREIFMIQKKAKFTDMK) lie on the Extracellular side of the membrane. Residues 72 to 92 (ALVLLVVVNGIAAGYSLVQAV) form a helical membrane-spanning segment. The Cytoplasmic portion of the chain corresponds to 93 to 108 (RCVVGLMKGRVLFSKP). The helical transmembrane segment at 109–129 (LAWAIFFGDQAVAYLCVAGVA) threads the bilayer. Residues 130–166 (AAAQSAAFAKLGEPELQWMKICNMYGKFCNQVGEGIA) are Extracellular-facing. A helical membrane pass occupies residues 167–187 (SALFACIGMVLISCISAFGVF). Topologically, residues 188 to 201 (RLYGGSKSRPSSRW) are cytoplasmic.

This sequence belongs to the Casparian strip membrane proteins (CASP) family. In terms of assembly, homodimer and heterodimers.

Its subcellular location is the cell membrane. The protein is CASP-like protein 2B2 of Arabidopsis thaliana (Mouse-ear cress).